The chain runs to 464 residues: Gasdermin-A3 (464 aa).

Positions 1–261 are triggers pyroptosis; it reads MPVFEDVTRA…EEPEEEKLIG (261 aa). 9–13 contacts a cardiolipin; it reads RALVR. 4 beta stranded membrane passes run 78-95, 99-120, 164-180, and 184-198; these read NFSF…LVEV, VKVK…TLSV, VTVE…SLPS, and LGLQ…AVTI. The stretch at 255–327 forms a coiled coil; sequence EEEKLIGEMH…DKGQKVTLEA (73 aa).

Belongs to the gasdermin family. In terms of assembly, homooligomer; homooligomeric ring-shaped pore complex containing 18-36 subunits when inserted in the membrane. Cleavage relieves autoinhibition by releasing the N-terminal moiety (Gasdermin-A3, N-terminal) that initiates pyroptosis. In contrast to Gsdma, not cleaved by bacterial effector protein SpeB. Post-translationally, palmitoylated. In terms of tissue distribution, highest levels in skin with weak expression in placenta and testis. Not detected in the gastrointestinal tract. In skin, expressed in postnatal hair follicles and epidermis as well as sebaceous gland basal cells.

The protein resides in the cytoplasm. It localises to the cytosol. It is found in the cell membrane. The protein localises to the mitochondrion membrane. The full-length protein before cleavage is inactive: intramolecular interactions between N- and C-terminal domains mediate autoinhibition in the absence of activation signal. The intrinsic pyroptosis-inducing activity is carried by the released N-terminal moiety (Gasdermin-A3, N-terminal). Precursor of a pore-forming protein involved in the transition from catagen to telogen at the end of hair follicle morphogenesis. This form constitutes the precursor of the pore: upon cleavage, the released N-terminal moiety (Gasdermin-A3, N-terminal) binds to membranes and forms pores, triggering pyroptosis. This form acts as a sensor of infection: activation is triggered by cleavage by some bacterial effector protein, which releases the N-terminal moiety (Gasdermin-A3, N-terminal). Its function is as follows. Pore-forming protein that causes membrane permeabilization and pyroptosis. Released upon cleavage by some bacterial effector protein, and binds to membrane inner leaflet lipids. Homooligomerizes within the membrane and forms pores of 10-15 nanometers (nm) of inner diameter, allowing the release of mature interleukin-1 (IL1B and IL18) and triggering pyroptosis. Binds to membrane inner leaflet lipids, including bisphosphorylated phosphatidylinositols, such as phosphatidylinositol (4,5)-bisphosphate, as well as phosphatidylinositol (3,4,5)-bisphosphate, and more weakly to monophosphorylated phosphatidylinositols. Also binds to bacterial and mitochondrial lipids, including cardiolipin, and exhibits bactericidal activity. Plays a role in the transition from catagen to telogen at the end of hair follicle morphogenesis, possibly by regulating hair follicle stem cell niche maintenance. Also required for mammary gland development. The protein is Gasdermin-A3 of Mus musculus (Mouse).